The primary structure comprises 108 residues: DNA-binding protein HBbu (108 aa).

It belongs to the bacterial histone-like protein family.

Histone-like DNA-binding protein which is capable of wrapping DNA to stabilize it, and thus to prevent its denaturation under extreme environmental conditions. The sequence is that of DNA-binding protein HBbu (hbb) from Borrelia andersonii (Borreliella andersonii).